The chain runs to 338 residues: tRNA-specific 2-thiouridylase MnmA (338 aa).

ATP-binding positions include Ala-6–Ser-13 and Met-32. Cys-92 acts as the Nucleophile in catalysis. An intrachain disulfide couples Cys-92 to Cys-186. An ATP-binding site is contributed by Gly-116. Positions Lys-134 to Gln-136 are interaction with tRNA. The active-site Cysteine persulfide intermediate is Cys-186. Residues Arg-288–Tyr-289 form an interaction with tRNA region.

Belongs to the MnmA/TRMU family.

Its subcellular location is the cytoplasm. It carries out the reaction S-sulfanyl-L-cysteinyl-[protein] + uridine(34) in tRNA + AH2 + ATP = 2-thiouridine(34) in tRNA + L-cysteinyl-[protein] + A + AMP + diphosphate + H(+). Catalyzes the 2-thiolation of uridine at the wobble position (U34) of tRNA, leading to the formation of s(2)U34. This is tRNA-specific 2-thiouridylase MnmA from Campylobacter jejuni subsp. jejuni serotype O:2 (strain ATCC 700819 / NCTC 11168).